The following is a 142-amino-acid chain: Large ribosomal subunit protein uL13 (142 aa).

This sequence belongs to the universal ribosomal protein uL13 family. In terms of assembly, part of the 50S ribosomal subunit.

In terms of biological role, this protein is one of the early assembly proteins of the 50S ribosomal subunit, although it is not seen to bind rRNA by itself. It is important during the early stages of 50S assembly. The polypeptide is Large ribosomal subunit protein uL13 (Chromohalobacter salexigens (strain ATCC BAA-138 / DSM 3043 / CIP 106854 / NCIMB 13768 / 1H11)).